Here is a 337-residue protein sequence, read N- to C-terminus: MARMFYDADANLENLKGKTIAVMGFGSQGHAQAQNLKESGLNVIVGLRKPFDEASEKEWNAVIAAGITPMSVAEAAEAADVIQILLPDEVQARVYNAEIKPYLKAGNALGFSHGFNIHFGQIVPPAFVDVFMVAPKSPGHLVRRMYVKGAGVPGLVAVQQDYSGKAKDLALAYACGIGCTRAGVIETSFQEETETDLFGEQCVLCGGVTELVKAGFETLVEAGYQPEIAYFECMHELKLIVDLMYEGGMSYMRYSISDTAEWGDYTKGPEIIGEEARYAMYEALQDIQDGSFAKGWLLENMVGRPRFNALKRQNREHLIEEVGAELRGMMPWLKETK.

In terms of domain architecture, KARI N-terminal Rossmann spans 2-187; the sequence is ARMFYDADAN…GCTRAGVIET (186 aa). NADP(+) is bound by residues 25 to 28, R48, and 88 to 91; these read FGSQ and DEVQ. Residue H113 is part of the active site. G139 contacts NADP(+). Residues 188–333 form the KARI C-terminal knotted domain; that stretch reads SFQEETETDL…AELRGMMPWL (146 aa). Positions 196, 200, 232, and 236 each coordinate Mg(2+). Substrate is bound at residue S257.

This sequence belongs to the ketol-acid reductoisomerase family. Mg(2+) is required as a cofactor.

The enzyme catalyses (2R)-2,3-dihydroxy-3-methylbutanoate + NAD(+) = (2S)-2-acetolactate + NADH + H(+). It carries out the reaction (2R)-2,3-dihydroxy-3-methylbutanoate + NADP(+) = (2S)-2-acetolactate + NADPH + H(+). It functions in the pathway amino-acid biosynthesis; L-isoleucine biosynthesis; L-isoleucine from 2-oxobutanoate: step 2/4. It participates in amino-acid biosynthesis; L-valine biosynthesis; L-valine from pyruvate: step 2/4. Involved in the biosynthesis of branched-chain amino acids (BCAA). Catalyzes an alkyl-migration followed by a ketol-acid reduction of (S)-2-acetolactate (S2AL) to yield (R)-2,3-dihydroxy-isovalerate. In the isomerase reaction, S2AL is rearranged via a Mg-dependent methyl migration to produce 3-hydroxy-3-methyl-2-ketobutyrate (HMKB). In the reductase reaction, this 2-ketoacid undergoes a metal-dependent reduction by NADPH or NADH to yield (R)-2,3-dihydroxy-isovalerate. This is Ketol-acid reductoisomerase (NAD(P)(+)) from Syntrophomonas wolfei subsp. wolfei (strain DSM 2245B / Goettingen).